The sequence spans 93 residues: Putative regulatory protein LA_2599 (93 aa).

This sequence belongs to the RemA family.

The protein is Putative regulatory protein LA_2599 of Leptospira interrogans serogroup Icterohaemorrhagiae serovar Lai (strain 56601).